A 122-amino-acid polypeptide reads, in one-letter code: UPF0382 membrane protein SAUSA300_0565 (122 aa).

4 helical membrane passes run 3 to 23, 46 to 66, 69 to 89, and 98 to 118; these read LFII…AFGA, MYHG…SINV, AGWL…ILVL, and ITPI…IATF.

The protein belongs to the UPF0382 family.

Its subcellular location is the cell membrane. In Staphylococcus aureus (strain USA300), this protein is UPF0382 membrane protein SAUSA300_0565.